The sequence spans 221 residues: Probable septum site-determining protein MinC (221 aa).

The protein belongs to the MinC family. Interacts with MinD and FtsZ.

In terms of biological role, cell division inhibitor that blocks the formation of polar Z ring septums. Rapidly oscillates between the poles of the cell to destabilize FtsZ filaments that have formed before they mature into polar Z rings. Prevents FtsZ polymerization. The chain is Probable septum site-determining protein MinC from Shewanella oneidensis (strain ATCC 700550 / JCM 31522 / CIP 106686 / LMG 19005 / NCIMB 14063 / MR-1).